Reading from the N-terminus, the 653-residue chain is Dual specificity protein kinase shkB (653 aa).

Residues 112-133 form a disordered region; sequence NPNNNNNNSNNTNSSDSNQNYS. In terms of domain architecture, Protein kinase spans 174-432; sequence YNREAKLGSG…FAEISKQRIL (259 aa). ATP-binding positions include 180–188 and Lys201; that span reads LGSGAFGSV. Asp298 (proton acceptor) is an active-site residue. One can recognise an SH2 domain in the interval 534 to 625; the sequence is GFMAATSSKN…IKEPFEGGPF (92 aa).

It belongs to the protein kinase superfamily. TKL Ser/Thr protein kinase family. SH2 domain-containing protein kinase subfamily.

It localises to the membrane. It carries out the reaction L-seryl-[protein] + ATP = O-phospho-L-seryl-[protein] + ADP + H(+). The catalysed reaction is L-threonyl-[protein] + ATP = O-phospho-L-threonyl-[protein] + ADP + H(+). Required for proper chemotaxis and phagocytosis; proper spatiotemporal control of F-actin levels in chemotaxing cells. Negative regulator of the PI3K (phosphatidylinositol 3 kinase) pathway. Predominantly phosphorylates serines and threonines and tyrosines at a lower level. This chain is Dual specificity protein kinase shkB (shkB), found in Dictyostelium discoideum (Social amoeba).